Reading from the N-terminus, the 429-residue chain is MSQITDVYAREILDSRGNPTLEVEVFLDSGVMGRAAVPSGASTGEREALELRDGDKGRYLGKGVEQAVSNVNDIIADEITGMDATDQVGIDKKMLELDGTEFKSRLGANAILGVSLAVAKAAAEEVGVPLYQYIGGCNAKELPLPMMNIINGGAHADNNVDIQEFMIMPAGAANFKEALRMGAEIFHALKSVLKGKGYNTAVGDEGGFAPNLKSNEEALEVIMEAIVKAGYKPGEEVLLALDVASSELFENGVYTLENEAESKKTADQLVDFYENLVNKYPIVSIEDGMAENDWDGWKKLTDRLGKRIQIVGDDLFVTNPSILKEGIKKGIANSILIKLNQIGTLTETLDAIEMAKRAGYTCVISHRSGETEDTTLADLAVAVNAGQIKTGSLCRTDRVCKYNQLLRIEDELDDVAQFRGHEVFYNIKK.

Gln163 provides a ligand contact to (2R)-2-phosphoglycerate. The active-site Proton donor is the Glu205. The Mg(2+) site is built by Asp242, Glu286, and Asp313. (2R)-2-phosphoglycerate contacts are provided by Lys338, Arg367, Ser368, and Lys389. Lys338 (proton acceptor) is an active-site residue.

It belongs to the enolase family. Mg(2+) serves as cofactor.

It is found in the cytoplasm. It localises to the secreted. The protein localises to the cell surface. The enzyme catalyses (2R)-2-phosphoglycerate = phosphoenolpyruvate + H2O. It functions in the pathway carbohydrate degradation; glycolysis; pyruvate from D-glyceraldehyde 3-phosphate: step 4/5. Catalyzes the reversible conversion of 2-phosphoglycerate (2-PG) into phosphoenolpyruvate (PEP). It is essential for the degradation of carbohydrates via glycolysis. This is Enolase from Citrifermentans bemidjiense (strain ATCC BAA-1014 / DSM 16622 / JCM 12645 / Bem) (Geobacter bemidjiensis).